The sequence spans 283 residues: Pantothenate synthetase (283 aa).

ATP is bound at residue 30–37 (MGNLHAGH). The Proton donor role is filled by His37. Gln61 contributes to the (R)-pantoate binding site. Gln61 serves as a coordination point for beta-alanine. Residue 149–152 (GEKD) participates in ATP binding. Residue Gln155 coordinates (R)-pantoate. ATP-binding positions include Val178 and 186–189 (LSSR).

This sequence belongs to the pantothenate synthetase family. As to quaternary structure, homodimer.

The protein resides in the cytoplasm. The enzyme catalyses (R)-pantoate + beta-alanine + ATP = (R)-pantothenate + AMP + diphosphate + H(+). It participates in cofactor biosynthesis; (R)-pantothenate biosynthesis; (R)-pantothenate from (R)-pantoate and beta-alanine: step 1/1. Catalyzes the condensation of pantoate with beta-alanine in an ATP-dependent reaction via a pantoyl-adenylate intermediate. This chain is Pantothenate synthetase, found in Pseudomonas paraeruginosa (strain DSM 24068 / PA7) (Pseudomonas aeruginosa (strain PA7)).